Consider the following 404-residue polypeptide: S-adenosylmethionine synthase (404 aa).

An ATP-binding site is contributed by His17. Asp19 provides a ligand contact to Mg(2+). Glu45 serves as a coordination point for K(+). Residues Glu58 and Gln101 each coordinate L-methionine. The interval 101–111 (QSPDIAMGVDQ) is flexible loop. Residues 177–179 (DGK), 244–245 (RF), Asp253, 259–260 (RK), Ala276, and Lys280 contribute to the ATP site. L-methionine is bound at residue Asp253. Position 284 (Lys284) interacts with L-methionine.

The protein belongs to the AdoMet synthase family. Homotetramer; dimer of dimers. Requires Mg(2+) as cofactor. K(+) serves as cofactor.

It is found in the cytoplasm. It carries out the reaction L-methionine + ATP + H2O = S-adenosyl-L-methionine + phosphate + diphosphate. It functions in the pathway amino-acid biosynthesis; S-adenosyl-L-methionine biosynthesis; S-adenosyl-L-methionine from L-methionine: step 1/1. In terms of biological role, catalyzes the formation of S-adenosylmethionine (AdoMet) from methionine and ATP. The overall synthetic reaction is composed of two sequential steps, AdoMet formation and the subsequent tripolyphosphate hydrolysis which occurs prior to release of AdoMet from the enzyme. This chain is S-adenosylmethionine synthase, found in Geobacillus thermodenitrificans (strain NG80-2).